A 142-amino-acid chain; its full sequence is MAAMTVQLDIVSAEGGIYSGRVSHLQVTGSEGELGIMHGHAPLISKIKPGMARVTKQDGSEEVFYLSGGILEVQPASTSILADVVLRADDIDEKAAIEAKNRAEAHMVDAGSDFDYQAALIEIAKATAQLRVLETIKKNIAR.

The protein belongs to the ATPase epsilon chain family. F-type ATPases have 2 components, CF(1) - the catalytic core - and CF(0) - the membrane proton channel. CF(1) has five subunits: alpha(3), beta(3), gamma(1), delta(1), epsilon(1). CF(0) has three main subunits: a, b and c.

The protein resides in the cell inner membrane. Produces ATP from ADP in the presence of a proton gradient across the membrane. In Shewanella denitrificans (strain OS217 / ATCC BAA-1090 / DSM 15013), this protein is ATP synthase epsilon chain.